The following is an 83-amino-acid chain: Large ribosomal subunit protein bL31B (83 aa).

Belongs to the bacterial ribosomal protein bL31 family. Type B subfamily. Part of the 50S ribosomal subunit.

In Bacteroides fragilis (strain ATCC 25285 / DSM 2151 / CCUG 4856 / JCM 11019 / LMG 10263 / NCTC 9343 / Onslow / VPI 2553 / EN-2), this protein is Large ribosomal subunit protein bL31B.